We begin with the raw amino-acid sequence, 452 residues long: GTPase Der (452 aa).

EngA-type G domains follow at residues 4–169 and 177–352; these read PVVA…PPQD and IQMA…EQHR. Residues 10–17, 57–61, 120–123, 183–190, 230–234, and 295–298 each bind GTP; these read GRPNVGKS, DTGGL, NKCE, DTAGI, and NKWD. The 86-residue stretch at 353-438 folds into the KH-like domain; sequence RRVTTAVVNE…PVRLFWRGKQ (86 aa).

This sequence belongs to the TRAFAC class TrmE-Era-EngA-EngB-Septin-like GTPase superfamily. EngA (Der) GTPase family. In terms of assembly, associates with the 50S ribosomal subunit.

GTPase that plays an essential role in the late steps of ribosome biogenesis. This chain is GTPase Der, found in Synechococcus sp. (strain RCC307).